We begin with the raw amino-acid sequence, 72 residues long: MSGRGFLLLALLLLVTVEATRVEKKHSGILLAWSGPRNRFVRIGRRDMQSPLLSERLRFRALGFRQPSSQKQ.

Positions 1-19 (MSGRGFLLLALLLLVTVEA) are cleaved as a signal peptide. Residues 20–25 (TRVEKK) constitute a propeptide that is removed on maturation. The positively charged region crucial for activity against MRGPRX1 receptors stretch occupies residues 32-39 (AWSGPRNR). Ile43 is modified (isoleucine amide). The propeptide occupies 44-72 (GRRDMQSPLLSERLRFRALGFRQPSSQKQ).

It belongs to the FARP (FMRFamide related peptide) family. As to expression, expressed by the venom duct.

Its subcellular location is the secreted. Functionally, this peptide activates human sensory neuron-specific G-protein coupled receptors MRGPRX1, but not mouse receptors (EC(50)=0.54 uM). Compared with the agonist chloroquine (anti-malaria drug), it is 600-fold more potent. In vivo, induces itch sensation, since intradermal cheek injection into humanized transgenic mouse (mouse MRGPRX1 replaced by human MRGPRX1) induces scratching. In vivo, treatment of zebrafish larvae with high doses (10 uM) induces hypoactivity at the beginning of the experiment during the dark phase and hyperactivity in the strobe phase after one hour, even after the removal of the toxin from the solution. The polypeptide is Conorfamide-Tx2 (Conus textile (Cloth-of-gold cone)).